The primary structure comprises 709 residues: Elongation factor G (709 aa).

A tr-type G domain is found at 8–297; it reads ANTRNIGIMA…AVIDYLPSPL (290 aa). GTP contacts are provided by residues 17–24, 81–85, and 135–138; these read AHVDAGKT, DTPGH, and NKMD.

This sequence belongs to the TRAFAC class translation factor GTPase superfamily. Classic translation factor GTPase family. EF-G/EF-2 subfamily.

The protein resides in the cytoplasm. Functionally, catalyzes the GTP-dependent ribosomal translocation step during translation elongation. During this step, the ribosome changes from the pre-translocational (PRE) to the post-translocational (POST) state as the newly formed A-site-bound peptidyl-tRNA and P-site-bound deacylated tRNA move to the P and E sites, respectively. Catalyzes the coordinated movement of the two tRNA molecules, the mRNA and conformational changes in the ribosome. This is Elongation factor G from Lactococcus lactis subsp. lactis (strain IL1403) (Streptococcus lactis).